The sequence spans 486 residues: Adenylate kinase 8 (486 aa).

Adenylate kinase stretches follow at residues 58–258 and 269–471; these read PRII…NFIC and PRIL…SRLV. ATP is bound at residue 67-72; that stretch reads ASGKKT. The NMP 1 stretch occupies residues 87–112; the sequence is TFCDILKDDSDLTRAAQSYYDKKQNV. AMP-binding positions include 139–142 and R202; that span reads AIPK. Residues 176–205 form an LID 1 region; the sequence is GKRIDPVTGDVYHVTFMWPESEEVAQRLET. Residue 278-283 coordinates ATP; it reads GAGRNL. The NMP 2 stretch occupies residues 298–327; the sequence is CCGELLKAVSADESHMGELIKPYLESEQQV. Residues 325 to 327 and 354 to 357 contribute to the AMP site; these read QQV and GFPR. An LID 2 region spans residues 391–424; that stretch reads LRAVDPVTGEWYHSVYKPPPGPEVQARLRFNPQH. R392 contributes to the ATP binding site. R432 serves as a coordination point for AMP.

It belongs to the adenylate kinase family.

The protein resides in the cytoplasm. The protein localises to the cytosol. The enzyme catalyses AMP + ATP = 2 ADP. The catalysed reaction is a 2'-deoxyribonucleoside 5'-diphosphate + ATP = a 2'-deoxyribonucleoside 5'-triphosphate + ADP. It catalyses the reaction a ribonucleoside 5'-diphosphate + ATP = a ribonucleoside 5'-triphosphate + ADP. Nucleoside monophosphate (NMP) kinase that catalyzes the reversible transfer of the terminal phosphate group between nucleoside triphosphates and monophosphates. Has highest activity toward AMP, and weaker activity toward dAMP, CMP and dCMP. Also displays broad nucleoside diphosphate kinase activity. The chain is Adenylate kinase 8 (ak8) from Danio rerio (Zebrafish).